Here is a 432-residue protein sequence, read N- to C-terminus: Glutamate-1-semialdehyde 2,1-aminomutase (432 aa).

Lys-266 carries the N6-(pyridoxal phosphate)lysine modification.

It belongs to the class-III pyridoxal-phosphate-dependent aminotransferase family. HemL subfamily. Homodimer. Pyridoxal 5'-phosphate is required as a cofactor.

Its subcellular location is the cytoplasm. It catalyses the reaction (S)-4-amino-5-oxopentanoate = 5-aminolevulinate. It participates in porphyrin-containing compound metabolism; protoporphyrin-IX biosynthesis; 5-aminolevulinate from L-glutamyl-tRNA(Glu): step 2/2. This Janthinobacterium sp. (strain Marseille) (Minibacterium massiliensis) protein is Glutamate-1-semialdehyde 2,1-aminomutase.